The chain runs to 336 residues: Serpentine receptor class delta-51 (336 aa).

A run of 7 helical transmembrane segments spans residues 14 to 34, 48 to 68, 93 to 113, 133 to 153, 188 to 208, 237 to 257, and 275 to 295; these read VYYSLNVTLALSINILLLFIM, YLFNTALFEIIVSLSTYFAQC, CFVTFAVVQCSVVAASFSILL, ATTFIIFSFFPTVMLLFQLLT, AAIIAQSLISLGVYMSPLIAF, GLLIQTLIPFCVYIPPYSYFL, and IFGSFTAFINPLLTFYFVLPY.

The protein belongs to the nematode receptor-like protein srd family.

Its subcellular location is the membrane. The polypeptide is Serpentine receptor class delta-51 (srd-51) (Caenorhabditis elegans).